The following is a 475-amino-acid chain: Aspartyl/glutamyl-tRNA(Asn/Gln) amidotransferase subunit B (475 aa).

Belongs to the GatB/GatE family. GatB subfamily. Heterotrimer of A, B and C subunits.

The catalysed reaction is L-glutamyl-tRNA(Gln) + L-glutamine + ATP + H2O = L-glutaminyl-tRNA(Gln) + L-glutamate + ADP + phosphate + H(+). It catalyses the reaction L-aspartyl-tRNA(Asn) + L-glutamine + ATP + H2O = L-asparaginyl-tRNA(Asn) + L-glutamate + ADP + phosphate + 2 H(+). Its function is as follows. Allows the formation of correctly charged Asn-tRNA(Asn) or Gln-tRNA(Gln) through the transamidation of misacylated Asp-tRNA(Asn) or Glu-tRNA(Gln) in organisms which lack either or both of asparaginyl-tRNA or glutaminyl-tRNA synthetases. The reaction takes place in the presence of glutamine and ATP through an activated phospho-Asp-tRNA(Asn) or phospho-Glu-tRNA(Gln). This chain is Aspartyl/glutamyl-tRNA(Asn/Gln) amidotransferase subunit B, found in Bacillus anthracis (strain A0248).